A 360-amino-acid chain; its full sequence is Phenylalanine--tRNA ligase alpha subunit (360 aa).

Glutamate 260 contacts Mg(2+).

The protein belongs to the class-II aminoacyl-tRNA synthetase family. Phe-tRNA synthetase alpha subunit type 1 subfamily. Tetramer of two alpha and two beta subunits. Mg(2+) serves as cofactor.

It localises to the cytoplasm. It catalyses the reaction tRNA(Phe) + L-phenylalanine + ATP = L-phenylalanyl-tRNA(Phe) + AMP + diphosphate + H(+). The polypeptide is Phenylalanine--tRNA ligase alpha subunit (Bradyrhizobium sp. (strain ORS 278)).